A 257-amino-acid polypeptide reads, in one-letter code: Probable enoyl-CoA hydratase echA8 (257 aa).

The protein belongs to the enoyl-CoA hydratase/isomerase family.

It catalyses the reaction a (3S)-3-hydroxyacyl-CoA = a (2E)-enoyl-CoA + H2O. It carries out the reaction a 4-saturated-(3S)-3-hydroxyacyl-CoA = a (3E)-enoyl-CoA + H2O. Functionally, could possibly oxidize fatty acids using specific components. The chain is Probable enoyl-CoA hydratase echA8 (echA8) from Mycobacterium tuberculosis (strain CDC 1551 / Oshkosh).